Reading from the N-terminus, the 906-residue chain is Alanine--tRNA ligase, chloroplastic/mitochondrial (906 aa).

Residues 1-10 (MSAATERERL) show a composition bias toward basic and acidic residues. Residues 1 to 22 (MSAATERERLTNANPNARGKDN) form a disordered region. Residues His589, His593, Cys691, and His695 each coordinate Zn(2+).

It belongs to the class-II aminoacyl-tRNA synthetase family. Monomer. It depends on Zn(2+) as a cofactor.

The protein localises to the plastid. It localises to the chloroplast. Its subcellular location is the mitochondrion. It catalyses the reaction tRNA(Ala) + L-alanine + ATP = L-alanyl-tRNA(Ala) + AMP + diphosphate. In terms of biological role, catalyzes the attachment of alanine to tRNA(Ala) in a two-step reaction: alanine is first activated by ATP to form Ala-AMP and then transferred to the acceptor end of tRNA(Ala). Also edits incorrectly charged tRNA(Ala) via its editing domain. The sequence is that of Alanine--tRNA ligase, chloroplastic/mitochondrial from Ostreococcus lucimarinus (strain CCE9901).